The sequence spans 46 residues: Mu-segestritoxin-Sf1d (46 aa).

Intrachain disulfides connect Cys-3-Cys-19, Cys-10-Cys-22, Cys-18-Cys-42, and Cys-24-Cys-40. The segment at 31–33 (RPW) is keys region for toxin activity.

Belongs to the neurotoxin 16 (SFI) family. In terms of tissue distribution, expressed by the venom gland.

It localises to the secreted. Functionally, insecticidal toxin. It inhibits insect voltage-gated sodium channels (Nav) by partially blocking the channel pore in DUM neurons from the American cockroach, not by acting as a gating modifier. The inhibition is only partially reversible after prolonged washout. In vivo, the toxin causes flaccid paralysis followed by death when injected into Heliothis virescens larvae. It also causes uncoordinated movements followed by full paralysis to sheep blowflies (Lucilia cuprina). When the toxin is fused to snowdrop lectin, it is orally active against larvae of the tomato moth (Laconobia oleracea), the rice brown planthopper (Nilaparvata lugens), and the peach-potato aphid (Myzus persicae). The polypeptide is Mu-segestritoxin-Sf1d (Segestria florentina (Tube-web spider)).